The sequence spans 227 residues: MICOS complex subunit MIC19 (227 aa).

Residue glycine 2 is the site of N-myristoyl glycine attachment. At serine 29 the chain carries Phosphoserine. Disordered regions lie at residues 34–61 (DRMKESSPSGSKSQRYSGAYGASVSDEE) and 73–92 (EQAKKESEDQKRLKQAKELD). The segment covering 39–49 (SSPSGSKSQRY) has biased composition (polar residues). Tyrosine 49 is modified (phosphotyrosine). Phosphoserine occurs at positions 50, 56, and 58. Lysine 142 carries the N6-acetyllysine modification. The CHCH domain maps to 180–222 (HPVCADLQAKILQCYRENTHQTLKCSALATQYMHCVNHAKQSM). 2 consecutive short sequence motifs (cx9C motif) follow at residues 183–193 (CADLQAKILQC) and 204–214 (CSALATQYMHC). 2 disulfides stabilise this stretch: cysteine 183–cysteine 214 and cysteine 193–cysteine 204.

The protein belongs to the MICOS complex subunit Mic19 family. Metazoan Mic19 subfamily. Component of the mitochondrial contact site and cristae organizing system (MICOS) complex, composed of at least MICOS10/MIC10, CHCHD3/MIC19, CHCHD6/MIC25, APOOL/MIC27, IMMT/MIC60, APOO/MIC23/MIC26 and MICOS13/MIC13. This complex was also known under the names MINOS or MitOS complex. The MICOS complex associates with mitochondrial outer membrane proteins SAMM50, MTX1 and MTX2 (together described as components of the mitochondrial outer membrane sorting assembly machinery (SAM) complex) and DNAJC11, mitochondrial inner membrane protein TMEM11 and with HSPA9. The MICOS and SAM complexes together with DNAJC11 are part of a large protein complex spanning both membranes termed the mitochondrial intermembrane space bridging (MIB) complex. Interacts with HSPA1A/HSPA1B and OPA1, preferentially with the soluble OPA1 form. Interacts with IMMT/MIC60. As to quaternary structure, (Microbial infection) Interacts with human cytomegalovirus protein UL13; this interaction alters cristae architecture. As to expression, detected at low levels in brain, placenta, lung, liver, kidney and pancreas with increased levels in heart and skeletal muscle. Higher expression in primary lung cancers than in normal lung tissue.

The protein resides in the mitochondrion inner membrane. The protein localises to the cytoplasm. It is found in the nucleus. It localises to the mitochondrion. In terms of biological role, component of the MICOS complex, a large protein complex of the mitochondrial inner membrane that plays crucial roles in the maintenance of crista junctions, inner membrane architecture, and formation of contact sites to the outer membrane. Plays an important role in the maintenance of the MICOS complex stability and the mitochondrial cristae morphology. Has also been shown to function as a transcription factor which binds to the BAG1 promoter and represses BAG1 transcription. The chain is MICOS complex subunit MIC19 (CHCHD3) from Homo sapiens (Human).